Consider the following 576-residue polypeptide: MDANSINSFFLIGALLTAVSVLLSPMSSRLGIPILLIFLAVGILAGEDGPGGILFDDYSTAYLVSNLALAIILLDGGMRTRVASFRVALWPALSLATFGVAITTSITGMMAAWLFDLHWLQGLLVGAIVGSTDAAAVFSLLKGRSLNERVGATLEIESGSNDPMAVFLTVTLIAILANVDTEMSFSFMFISFIKQFGLGICLGLGGGWMLWKLVNLSKLADGLYSILVLSGGLIIYAASNKLGGSGILSIYLVGLFLGNKPTRGRHAILNVLDGMTWVSQIGMFLVLGLLLTPSDLVDILIPGFALAFGMILFARPVAVWISLLPFKSFSSRDRWFISWVGLRGAVPIILAVFPMMAGLPGAQLYFNLAFFVVLVSLLVQGASLTTAARLAKVELPPKPLPVSRSGVEIYPSSEWEVFVYRLSESKWCIGEPLKRLAMPDGTRIAAVFRNDTLLHPSGSTRLEAGDILCVLGQEKSLEALSNLFSQAPENKEVQRFFGDFFIETDVKLADLAPIYGLSLDNLADDMTVADLVVSQLGANPVLGDQFQWQSLHWVVAGLYEGKVTNVGIRLPTEHAL.

Transmembrane regions (helical) follow at residues 6 to 26 (INSFFLIGALLTAVSVLLSPM), 34 to 54 (ILLIFLAVGILAGEDGPGGIL), 58 to 78 (YSTAYLVSNLALAIILLDGGM), 87 to 107 (VALWPALSLATFGVAITTSIT), 109 to 129 (MMAAWLFDLHWLQGLLVGAIV), 163 to 183 (PMAVFLTVTLIAILANVDTEM), 185 to 205 (FSFMFISFIKQFGLGICLGLG), 219 to 239 (LADGLYSILVLSGGLIIYAAS), 242 to 262 (LGGSGILSIYLVGLFLGNKPT), 271 to 291 (VLDGMTWVSQIGMFLVLGLLL), 299 to 319 (ILIPGFALAFGMILFARPVAV), 335 to 355 (WFISWVGLRGAVPIILAVFPM), and 359 to 379 (LPGAQLYFNLAFFVVLVSLLV). The RCK C-terminal domain occupies 405-486 (SGVEIYPSSE…LEALSNLFSQ (82 aa)).

It belongs to the monovalent cation:proton antiporter 1 (CPA1) transporter (TC 2.A.36) family. NhaP2 subfamily.

Its subcellular location is the cell inner membrane. It catalyses the reaction K(+)(in) + H(+)(out) = K(+)(out) + H(+)(in). In terms of biological role, k(+)/H(+) antiporter that extrudes potassium in exchange for external protons and maintains the internal concentration of potassium under toxic levels. This Shewanella baltica (strain OS155 / ATCC BAA-1091) protein is K(+)/H(+) antiporter NhaP2.